A 97-amino-acid chain; its full sequence is Down syndrome critical region protein 8 (97 aa).

In terms of tissue distribution, expressed in numerous tissues; not found in breast, heart, small intestine and liver. Isoform 1: Predominantly expressed in the testis. Isoform 3: Predominantly expressed in the testis, at lower level in the placenta, during malignant progression of melanocytic tumors and in several tumors of varying origins. Isoform 4: Predominantly expressed in the testis, at lower level in the placenta, during malignant progression of melanocytic tumors and in several tumors of varying origins. Isoform 5: Predominantly expressed in the testis. Isoform 6: Predominantly expressed in the testis.

This chain is Down syndrome critical region protein 8, found in Homo sapiens (Human).